A 355-amino-acid polypeptide reads, in one-letter code: UDP-N-acetylglucosamine--N-acetylmuramyl-(pentapeptide) pyrophosphoryl-undecaprenol N-acetylglucosamine transferase (355 aa).

UDP-N-acetyl-alpha-D-glucosamine-binding positions include threonine 12 to glycine 14, asparagine 124, arginine 163, serine 191, isoleucine 243, alanine 262 to glutamate 267, and glutamine 288.

The protein belongs to the glycosyltransferase 28 family. MurG subfamily.

The protein localises to the cell inner membrane. The enzyme catalyses di-trans,octa-cis-undecaprenyl diphospho-N-acetyl-alpha-D-muramoyl-L-alanyl-D-glutamyl-meso-2,6-diaminopimeloyl-D-alanyl-D-alanine + UDP-N-acetyl-alpha-D-glucosamine = di-trans,octa-cis-undecaprenyl diphospho-[N-acetyl-alpha-D-glucosaminyl-(1-&gt;4)]-N-acetyl-alpha-D-muramoyl-L-alanyl-D-glutamyl-meso-2,6-diaminopimeloyl-D-alanyl-D-alanine + UDP + H(+). The protein operates within cell wall biogenesis; peptidoglycan biosynthesis. Its function is as follows. Cell wall formation. Catalyzes the transfer of a GlcNAc subunit on undecaprenyl-pyrophosphoryl-MurNAc-pentapeptide (lipid intermediate I) to form undecaprenyl-pyrophosphoryl-MurNAc-(pentapeptide)GlcNAc (lipid intermediate II). This Tolumonas auensis (strain DSM 9187 / NBRC 110442 / TA 4) protein is UDP-N-acetylglucosamine--N-acetylmuramyl-(pentapeptide) pyrophosphoryl-undecaprenol N-acetylglucosamine transferase.